The following is a 550-amino-acid chain: Mitochondrial distribution and morphology protein 12 (550 aa).

One can recognise an SMP-LTD domain in the interval 1–550; sequence MSIDLNWETV…VYPSYWTFLV (550 aa). Disordered regions lie at residues 76-97, 196-386, and 466-489; these read SDLA…DRRR, GHGH…KLRE, and ENEV…GGNG. Over residues 83 to 92 the composition is skewed to acidic residues; that stretch reads GSEEDEEEIA. Residues 270–286 are compositionally biased toward pro residues; it reads PPFPPSSTGGPSPPPGL. Residues 288-305 show a composition bias toward basic residues; the sequence is KPHHPHHPHHHHAHHAHP. Residues 327–344 are compositionally biased toward basic and acidic residues; the sequence is PTRDKTTPSHHPDPEDVH. Positions 346-355 are enriched in polar residues; that stretch reads PNTTTTNKQR. Low complexity predominate over residues 356-371; sequence STSPATSSPLATSAQE.

Belongs to the MDM12 family. Component of the ER-mitochondria encounter structure (ERMES) or MDM complex, composed of MMM1, MDM10, MDM12 and MDM34. An MMM1 homodimer associates with one molecule of MDM12 on each side in a pairwise head-to-tail manner, and the SMP-LTD domains of MMM1 and MDM12 generate a continuous hydrophobic tunnel for phospholipid trafficking.

Its subcellular location is the mitochondrion outer membrane. It is found in the endoplasmic reticulum membrane. In terms of biological role, component of the ERMES/MDM complex, which serves as a molecular tether to connect the endoplasmic reticulum (ER) and mitochondria. Components of this complex are involved in the control of mitochondrial shape and protein biogenesis, and function in nonvesicular lipid trafficking between the ER and mitochondria. MDM12 is required for the interaction of the ER-resident membrane protein MMM1 and the outer mitochondrial membrane-resident beta-barrel protein MDM10. The MDM12-MMM1 subcomplex functions in the major beta-barrel assembly pathway that is responsible for biogenesis of all mitochondrial outer membrane beta-barrel proteins, and acts in a late step after the SAM complex. The MDM10-MDM12-MMM1 subcomplex further acts in the TOM40-specific pathway after the action of the MDM12-MMM1 complex. Essential for establishing and maintaining the structure of mitochondria and maintenance of mtDNA nucleoids. This Podospora anserina (strain S / ATCC MYA-4624 / DSM 980 / FGSC 10383) (Pleurage anserina) protein is Mitochondrial distribution and morphology protein 12.